The following is a 1088-amino-acid chain: Protein unc-13 homolog D (1088 aa).

The interval Val-26–His-46 is disordered. One can recognise a C2 1 domain in the interval Gln-92 to Gln-239. 2 residues coordinate Ca(2+): Asp-127 and Asp-133. Phosphoserine is present on Ser-150. Residues Asp-206 and Asp-208 each coordinate Ca(2+). Residues Asp-240–Ala-543 are interaction with RAB27A. The MHD1 domain maps to Phe-557–Ile-675. The MHD2 domain maps to Glu-786–Tyr-893. Residues Arg-908–Gly-1033 form the C2 2 domain. Ca(2+) is bound by residues Leu-938, Asp-939, Asp-945, Asp-1003, Asp-1005, and Asp-1011.

It belongs to the unc-13 family. In terms of assembly, interacts with RAB27A and DOC2A. Interacts with RhoG; the interaction increases RhoG affinity to the membrane lipids, targets Unc13d to membrane lipids and facilitates cytotoxic granule (CG) docking to the plasma membrane. The cofactor is Ca(2+). In terms of tissue distribution, expressed in lung bronchial epithelium goblet/mucous cells. Also expressed in spleen and testis. Expressed at very low levels in heart muscle, kidney, liver, brain and skeletal muscle.

It localises to the cytoplasm. It is found in the membrane. The protein resides in the late endosome. Its subcellular location is the recycling endosome. The protein localises to the lysosome. Functionally, plays a role in cytotoxic granule exocytosis in lymphocytes. Required for both granule maturation and granule docking and priming at the immunologic synapse. Regulates assembly of recycling and late endosomal structures, leading to the formation of an endosomal exocytic compartment that fuses with perforin-containing granules at the immunologic synapse and licences them for exocytosis. Regulates Ca(2+)-dependent secretory lysosome exocytosis in mast cells. The polypeptide is Protein unc-13 homolog D (Unc13d) (Rattus norvegicus (Rat)).